The following is a 219-amino-acid chain: Large ribosomal subunit protein uL4c (219 aa).

Residues 53-81 are disordered; the sequence is REHTASTKTKSQVRGGGKKPWKQKGTGRA. Residues 68–79 show a composition bias toward basic residues; the sequence is GGKKPWKQKGTG.

Belongs to the universal ribosomal protein uL4 family. As to quaternary structure, part of the 50S ribosomal subunit.

It localises to the plastid. Its subcellular location is the chloroplast. Its function is as follows. Probably binds the 23S rRNA. This is Large ribosomal subunit protein uL4c (rpl4) from Cyanidium caldarium (Red alga).